A 393-amino-acid chain; its full sequence is Mitogen-activated protein kinase 10 (393 aa).

Positions 60 to 345 (KPPIRPIGRG…VKEALAHPYL (286 aa)) constitute a Protein kinase domain. ATP contacts are provided by residues 66–74 (IGRGACGIV) and K89. The Proton acceptor role is filled by D186. Phosphothreonine is present on T218. A TXY motif is present at residues 218 to 220 (TEY). The residue at position 220 (Y220) is a Phosphotyrosine. Residue T223 is modified to Phosphothreonine.

Belongs to the protein kinase superfamily. CMGC Ser/Thr protein kinase family. MAP kinase subfamily. In terms of assembly, interacts with MKK2. In terms of processing, dually phosphorylated on Thr-218 and Tyr-220, which activates the enzyme.

It carries out the reaction L-seryl-[protein] + ATP = O-phospho-L-seryl-[protein] + ADP + H(+). It catalyses the reaction L-threonyl-[protein] + ATP = O-phospho-L-threonyl-[protein] + ADP + H(+). With respect to regulation, activated by threonine and tyrosine phosphorylation. This is Mitogen-activated protein kinase 10 (MPK10) from Arabidopsis thaliana (Mouse-ear cress).